The primary structure comprises 156 residues: Large ribosomal subunit protein uL15 (156 aa).

Residues 1-13 (MKLNEIKDNEGAT) show a composition bias toward basic and acidic residues. Positions 1–39 (MKLNEIKDNEGATKNRKRLGRGIGSGSGKTAGRGVKGQK) are disordered. Residues 21–35 (RGIGSGSGKTAGRGV) are compositionally biased toward gly residues.

Belongs to the universal ribosomal protein uL15 family. As to quaternary structure, part of the 50S ribosomal subunit.

Binds to the 23S rRNA. This Rhizobium meliloti (strain 1021) (Ensifer meliloti) protein is Large ribosomal subunit protein uL15.